The following is a 332-amino-acid chain: tRNA N6-adenosine threonylcarbamoyltransferase (332 aa).

Fe cation contacts are provided by His-107 and His-111. Residues 129–133 (LVSGG), Asp-162, Gly-175, and Asn-267 contribute to the substrate site. Position 295 (Asp-295) interacts with Fe cation.

Belongs to the KAE1 / TsaD family. It depends on Fe(2+) as a cofactor.

Its subcellular location is the cytoplasm. The catalysed reaction is L-threonylcarbamoyladenylate + adenosine(37) in tRNA = N(6)-L-threonylcarbamoyladenosine(37) in tRNA + AMP + H(+). In terms of biological role, required for the formation of a threonylcarbamoyl group on adenosine at position 37 (t(6)A37) in tRNAs that read codons beginning with adenine. Is involved in the transfer of the threonylcarbamoyl moiety of threonylcarbamoyl-AMP (TC-AMP) to the N6 group of A37, together with TsaE and TsaB. TsaD likely plays a direct catalytic role in this reaction. The sequence is that of tRNA N6-adenosine threonylcarbamoyltransferase from Campylobacter hominis (strain ATCC BAA-381 / DSM 21671 / CCUG 45161 / LMG 19568 / NCTC 13146 / CH001A).